The chain runs to 239 residues: Biosynthetic peptidoglycan transglycosylase (239 aa).

Residues 29–49 traverse the membrane as a helical segment; it reads GMFGLGALMLVWIVAYAVVPV.

It belongs to the glycosyltransferase 51 family.

It localises to the cell inner membrane. The enzyme catalyses [GlcNAc-(1-&gt;4)-Mur2Ac(oyl-L-Ala-gamma-D-Glu-L-Lys-D-Ala-D-Ala)](n)-di-trans,octa-cis-undecaprenyl diphosphate + beta-D-GlcNAc-(1-&gt;4)-Mur2Ac(oyl-L-Ala-gamma-D-Glu-L-Lys-D-Ala-D-Ala)-di-trans,octa-cis-undecaprenyl diphosphate = [GlcNAc-(1-&gt;4)-Mur2Ac(oyl-L-Ala-gamma-D-Glu-L-Lys-D-Ala-D-Ala)](n+1)-di-trans,octa-cis-undecaprenyl diphosphate + di-trans,octa-cis-undecaprenyl diphosphate + H(+). It functions in the pathway cell wall biogenesis; peptidoglycan biosynthesis. In terms of biological role, peptidoglycan polymerase that catalyzes glycan chain elongation from lipid-linked precursors. The protein is Biosynthetic peptidoglycan transglycosylase of Jannaschia sp. (strain CCS1).